The following is a 482-amino-acid chain: ATP synthase subunit beta (482 aa).

G161 to T168 is a binding site for ATP.

It belongs to the ATPase alpha/beta chains family. In terms of assembly, F-type ATPases have 2 components, CF(1) - the catalytic core - and CF(0) - the membrane proton channel. CF(1) has five subunits: alpha(3), beta(3), gamma(1), delta(1), epsilon(1). CF(0) has three main subunits: a(1), b(2) and c(9-12). The alpha and beta chains form an alternating ring which encloses part of the gamma chain. CF(1) is attached to CF(0) by a central stalk formed by the gamma and epsilon chains, while a peripheral stalk is formed by the delta and b chains.

The protein localises to the cell inner membrane. The enzyme catalyses ATP + H2O + 4 H(+)(in) = ADP + phosphate + 5 H(+)(out). Functionally, produces ATP from ADP in the presence of a proton gradient across the membrane. The catalytic sites are hosted primarily by the beta subunits. The polypeptide is ATP synthase subunit beta (Solibacter usitatus (strain Ellin6076)).